Consider the following 138-residue polypeptide: Protein FAM136A (138 aa).

Belongs to the FAM136 family.

The chain is Protein FAM136A (fam136a) from Xenopus tropicalis (Western clawed frog).